The sequence spans 124 residues: Putative outer membrane protein TC_0858 (124 aa).

The first 31 residues, 1 to 31 (MGKTKKRKQSITLIEMMVVITLIGIISGALA), serve as a signal peptide directing secretion.

The protein localises to the cell outer membrane. The polypeptide is Putative outer membrane protein TC_0858 (Chlamydia muridarum (strain MoPn / Nigg)).